Reading from the N-terminus, the 245-residue chain is uncharacterized protein (245 aa).

A signal peptide spans 1–27; the sequence is MKLKKRVSMFLVALTMCGGLFVTPAKA.

This is an uncharacterized protein from Bacillus subtilis (strain 168).